The sequence spans 602 residues: Wings apart-like protein homolog 1 (602 aa).

Residues 34–66 (NKQKRSPGQTVSKRLHKKQRVVSNPDLSLPSSP) form a disordered region. Positions 54 to 66 (VVSNPDLSLPSSP) are enriched in polar residues. The region spanning 160–492 (IQMKSIHELR…LGLVEESHEF (333 aa)) is the WAPL domain.

Belongs to the WAPL family.

The protein localises to the nucleus. Its subcellular location is the chromosome. Functionally, regulator of sister chromatid cohesion in mitosis which negatively regulates cohesin association with chromatin. This is Wings apart-like protein homolog 1 (wpl1) from Schizosaccharomyces pombe (strain 972 / ATCC 24843) (Fission yeast).